Here is a 122-residue protein sequence, read N- to C-terminus: Small ribosomal subunit protein uS13 (122 aa).

A disordered region spans residues 99–122; that stretch reads RGQRTHTNARTRKGPAKAIAGKKK.

The protein belongs to the universal ribosomal protein uS13 family. As to quaternary structure, part of the 30S ribosomal subunit. Forms a loose heterodimer with protein S19. Forms two bridges to the 50S subunit in the 70S ribosome.

Functionally, located at the top of the head of the 30S subunit, it contacts several helices of the 16S rRNA. In the 70S ribosome it contacts the 23S rRNA (bridge B1a) and protein L5 of the 50S subunit (bridge B1b), connecting the 2 subunits; these bridges are implicated in subunit movement. Contacts the tRNAs in the A and P-sites. The protein is Small ribosomal subunit protein uS13 of Cereibacter sphaeroides (strain ATCC 17029 / ATH 2.4.9) (Rhodobacter sphaeroides).